Consider the following 330-residue polypeptide: Delta-aminolevulinic acid dehydratase (330 aa).

Residues Cys-122, Cys-124, His-131, and Cys-132 each contribute to the Zn(2+) site. Residue Lys-199 is the Schiff-base intermediate with substrate of the active site. Lys-199 is modified (N6-succinyllysine). Arg-209 provides a ligand contact to 5-aminolevulinate. Ser-215 carries the phosphoserine modification. Arg-221 provides a ligand contact to 5-aminolevulinate. Cys-223 serves as a coordination point for Zn(2+). The Schiff-base intermediate with substrate role is filled by Lys-252. At Lys-252 the chain carries N6-succinyllysine. Ser-279 lines the 5-aminolevulinate pocket.

This sequence belongs to the ALAD family. Homooctamer; active form. Homohexamer; low activity form. Requires Zn(2+) as cofactor.

It localises to the cytoplasm. The protein localises to the cytosol. It carries out the reaction 2 5-aminolevulinate = porphobilinogen + 2 H2O + H(+). It functions in the pathway porphyrin-containing compound metabolism; protoporphyrin-IX biosynthesis; coproporphyrinogen-III from 5-aminolevulinate: step 1/4. Its activity is regulated as follows. Can alternate between a fully active homooctamer and a low-activity homohexamer. A bound magnesium ion may promote the assembly of the fully active homooctamer. The magnesium-binding site is absent in the low-activity homohexamer. Inhibited by compounds that favor the hexameric state. Inhibited by divalent lead ions. The lead ions partially displace the zinc cofactor. In terms of biological role, catalyzes an early step in the biosynthesis of tetrapyrroles. Binds two molecules of 5-aminolevulinate per subunit, each at a distinct site, and catalyzes their condensation to form porphobilinogen. The chain is Delta-aminolevulinic acid dehydratase (ALAD) from Pongo abelii (Sumatran orangutan).